Consider the following 181-residue polypeptide: Mitochondrial inner membrane protein Mpv17 (181 aa).

4 helical membrane-spanning segments follow: residues V20–T38, T48–L70, F91–F113, and L140–W162.

This sequence belongs to the peroxisomal membrane protein PXMP2/4 family.

The protein localises to the mitochondrion inner membrane. Its function is as follows. Involved in mitochondria homeostasis. The sequence is that of Mitochondrial inner membrane protein Mpv17 from Caenorhabditis briggsae.